The chain runs to 353 residues: Ribosomal RNA small subunit methyltransferase (353 aa).

Basic residues predominate over residues Met1 to Lys10. The tract at residues Met1–Gln23 is disordered. Positions 35, 37, 62, 83, 111, and 126 each coordinate S-adenosyl-L-methionine. A disordered region spans residues Ala270–Lys313. The span at Met285 to Glu308 shows a compositional bias: acidic residues.

It belongs to the class I-like SAM-binding methyltransferase superfamily. rRNA adenine N(6)-methyltransferase family. In terms of tissue distribution, expressed in rapidly dividing tissues, including root meristems and lateral root primordia, developing cotyledons and leaves, petals, anther, pollen grains and silique abscission zone.

The protein resides in the nucleus. Its subcellular location is the nucleolus. It carries out the reaction adenosine(1785)/adenosine(1786) in 18S rRNA + 4 S-adenosyl-L-methionine = N(6)-dimethyladenosine(1785)/N(6)-dimethyladenosine(1786) in 18S rRNA + 4 S-adenosyl-L-homocysteine + 4 H(+). Functionally, N6-adenine methyltransferase which modifies the AA dinucleotide at the plant nuclear 18S rRNA nucleotides A1785 and A1786. Required for generating appropriate patterns of gene expression during root development, including the cell-specific expression of transcriptional regulators involved in root hair and non-hair cells patterning. This Arabidopsis thaliana (Mouse-ear cress) protein is Ribosomal RNA small subunit methyltransferase.